The chain runs to 508 residues: Pancreatic alpha-amylase (508 aa).

A signal peptide spans 1-15 (MKFVLLLSLIGFCWA). At Gln16 the chain carries Pyrrolidone carboxylic acid. Disulfide bonds link Cys43–Cys101, Cys85–Cys130, and Cys156–Cys172. Ca(2+)-binding residues include Asn115, Arg170, and Asp179. Arg207 contacts chloride. The Nucleophile role is filled by Asp209. His213 provides a ligand contact to Ca(2+). Glu245 acts as the Proton donor in catalysis. Chloride contacts are provided by Asn310 and Arg349. Cystine bridges form between Cys390/Cys396 and Cys462/Cys474.

It belongs to the glycosyl hydrolase 13 family. Monomer. Ca(2+) is required as a cofactor. The cofactor is chloride.

Its subcellular location is the secreted. It is found in the extracellular space. It carries out the reaction Endohydrolysis of (1-&gt;4)-alpha-D-glucosidic linkages in polysaccharides containing three or more (1-&gt;4)-alpha-linked D-glucose units.. The protein is Pancreatic alpha-amylase (Amy2) of Rattus norvegicus (Rat).